Here is a 98-residue protein sequence, read N- to C-terminus: NADH-ubiquinone oxidoreductase chain 4L (98 aa).

3 consecutive transmembrane segments (helical) span residues 1–21, 29–49, and 61–81; these read MPVV…GLLI, SLLC…VTVL, and IILL…LVMV.

This sequence belongs to the complex I subunit 4L family. Core subunit of respiratory chain NADH dehydrogenase (Complex I) which is composed of 45 different subunits.

It is found in the mitochondrion inner membrane. It catalyses the reaction a ubiquinone + NADH + 5 H(+)(in) = a ubiquinol + NAD(+) + 4 H(+)(out). Functionally, core subunit of the mitochondrial membrane respiratory chain NADH dehydrogenase (Complex I) which catalyzes electron transfer from NADH through the respiratory chain, using ubiquinone as an electron acceptor. Part of the enzyme membrane arm which is embedded in the lipid bilayer and involved in proton translocation. The protein is NADH-ubiquinone oxidoreductase chain 4L (MT-ND4L) of Ursus americanus (American black bear).